Reading from the N-terminus, the 1068-residue chain is Carbamoyl phosphate synthase large chain (1068 aa).

The carboxyphosphate synthetic domain stretch occupies residues 1–401; sequence MPLNKDIKKV…AFLKGTRSLE (401 aa). Residues Arg-129, Arg-169, Gly-175, Gly-176, Lys-208, Val-210, Glu-215, Gly-241, Ile-242, His-243, Gln-284, and Glu-298 each contribute to the ATP site. One can recognise an ATP-grasp 1 domain in the interval 133–327; the sequence is RNVMSRINEP…IAKVASKIAL (195 aa). Residues Gln-284, Glu-298, and Asn-300 each contribute to the Mg(2+) site. The Mn(2+) site is built by Gln-284, Glu-298, and Asn-300. The segment at 402–549 is oligomerization domain; that stretch reads IGKYSLEHKK…YSTYDVYDEV (148 aa). The interval 550–932 is carbamoyl phosphate synthetic domain; sequence EVSKNKKVIV…ALYKGFIGAN (383 aa). An ATP-grasp 2 domain is found at 674–864; it reads DELLEKLKIA…IVDIATRVML (191 aa). 10 residues coordinate ATP: Arg-710, Lys-749, Leu-751, Glu-755, Gly-780, Val-781, His-782, Ser-783, Gln-823, and Glu-835. Positions 823, 835, and 837 each coordinate Mg(2+). Gln-823, Glu-835, and Asn-837 together coordinate Mn(2+). Residues 933 to 1068 form the MGS-like domain; sequence ISIKKEKGTV…ETLYIFDLSN (136 aa). Positions 933–1068 are allosteric domain; the sequence is ISIKKEKGTV…ETLYIFDLSN (136 aa).

The protein belongs to the CarB family. Composed of two chains; the small (or glutamine) chain promotes the hydrolysis of glutamine to ammonia, which is used by the large (or ammonia) chain to synthesize carbamoyl phosphate. Tetramer of heterodimers (alpha,beta)4. Mg(2+) is required as a cofactor. The cofactor is Mn(2+).

It catalyses the reaction hydrogencarbonate + L-glutamine + 2 ATP + H2O = carbamoyl phosphate + L-glutamate + 2 ADP + phosphate + 2 H(+). The enzyme catalyses hydrogencarbonate + NH4(+) + 2 ATP = carbamoyl phosphate + 2 ADP + phosphate + 2 H(+). It participates in amino-acid biosynthesis; L-arginine biosynthesis; carbamoyl phosphate from bicarbonate: step 1/1. Its pathway is pyrimidine metabolism; UMP biosynthesis via de novo pathway; (S)-dihydroorotate from bicarbonate: step 1/3. In terms of biological role, large subunit of the glutamine-dependent carbamoyl phosphate synthetase (CPSase). CPSase catalyzes the formation of carbamoyl phosphate from the ammonia moiety of glutamine, carbonate, and phosphate donated by ATP, constituting the first step of 2 biosynthetic pathways, one leading to arginine and/or urea and the other to pyrimidine nucleotides. The large subunit (synthetase) binds the substrates ammonia (free or transferred from glutamine from the small subunit), hydrogencarbonate and ATP and carries out an ATP-coupled ligase reaction, activating hydrogencarbonate by forming carboxy phosphate which reacts with ammonia to form carbamoyl phosphate. This Clostridium botulinum (strain Langeland / NCTC 10281 / Type F) protein is Carbamoyl phosphate synthase large chain.